Reading from the N-terminus, the 116-residue chain is uncharacterized protein (116 aa).

An HTH cro/C1-type domain is found at 6–60 (LKKCRKQKKLTQQNMADKLGITRPAYTAYELGSREPDYKTLINISNILDVSLDYL). A DNA-binding region (H-T-H motif) is located at residues 17 to 36 (QQNMADKLGITRPAYTAYEL).

This is an uncharacterized protein from Bacillus subtilis (strain 168).